The chain runs to 222 residues: Collectrin (222 aa).

The signal sequence occupies residues 1–14 (MLWALFFLVTTIHA). Topologically, residues 15 to 141 (ELCRPDAENA…LAPPMDPSVP (127 aa)) are extracellular. A Collectrin-like domain is found at 21–222 (AENAFKVRLS…LTEDERLTPL (202 aa)). N-linked (GlcNAc...) asparagine glycosylation is found at asparagine 76 and asparagine 93. The chain crosses the membrane as a helical span at residues 142 to 162 (VWIIVFGVIFCIVTVAIALLV). Residues 163–222 (LSGIRQRRRNKKGPPGVEDAEDKCENIITIENGIPCDPLDMKGGHINDGFLTEDERLTPL) lie on the Cytoplasmic side of the membrane. Phosphothreonine is present on residues threonine 214 and threonine 220.

The protein belongs to the CLTRN family. Monomer. Homodimer; dimerization prevents CLTRN cleavage by BACE2. Interacts with SLC6A18; this interaction regulates the trafficking of SLC6A18 to the cell membrane and its amino acid transporter activity. Interacts with SLC6A19; this interaction regulates the trafficking of SLC6A19 to the cell membrane and its amino acid transporter activity. Interacts with SNAPIN. In terms of processing, glycosylated. Glycosylation is required for plasma membrane localization and for its cleavage by BACE2. Post-translationally, proteolytically processed in pancreatic beta cells by BACE2 leading to the generation and extracellular release of soluble CLTRN, and a corresponding cell-associated C-terminal fragment which is later cleaved by gamma-secretase. This shedding process inactivates CLTRN. Three cleavage sites have been identified for BACE2, two clustered sites after Phe-116 and Leu-118 and a more membrane proximal site at Phe-125; the preferred BACE2 cleavage site seems to be between Phe-125 and Leu-126, Phe-116 and Leu-118 act as alternative sites. Kidney; collecting ducts. Pancreas; beta cells of islets.

The protein localises to the cell membrane. Functionally, plays an important role in amino acid transport by acting as binding partner of amino acid transporters SLC6A18 and SLC6A19, regulating their trafficking on the cell surface and their activity. May also play a role in trafficking of amino acid transporters SLC3A1 and SLC7A9 to the renal cortical cell membrane. Regulator of SNARE complex function. Stimulator of beta cell replication. This Rattus norvegicus (Rat) protein is Collectrin.